A 459-amino-acid polypeptide reads, in one-letter code: Protein phosphatase 1M (459 aa).

The segment covering 1 to 10 (MSAGWFRRRF) has biased composition (basic residues). Positions 1–64 (MSAGWFRRRF…SRPVRSPARG (64 aa)) are disordered. Residues 14 to 27 (EPLPAPRPPGPHAS) show a composition bias toward pro residues. Positions 38–48 (RGSSSSPGAAD) are enriched in low complexity. Mn(2+)-binding residues include Asp-125 and Gly-126. The PPM-type phosphatase domain occupies 162–459 (MHLNGRCICP…HSQGQESSDH (298 aa)).

It belongs to the PP2C family. Requires Mg(2+) as cofactor. The cofactor is Mn(2+).

Its subcellular location is the nucleus. The catalysed reaction is O-phospho-L-seryl-[protein] + H2O = L-seryl-[protein] + phosphate. It carries out the reaction O-phospho-L-threonyl-[protein] + H2O = L-threonyl-[protein] + phosphate. This is Protein phosphatase 1M (PPM1M) from Homo sapiens (Human).